The following is a 203-amino-acid chain: Putative 3-methyladenine DNA glycosylase (203 aa).

The protein belongs to the DNA glycosylase MPG family.

The sequence is that of Putative 3-methyladenine DNA glycosylase from Clostridium beijerinckii (strain ATCC 51743 / NCIMB 8052) (Clostridium acetobutylicum).